The sequence spans 105 residues: Cell division protein FtsB (105 aa).

The Cytoplasmic segment spans residues 1–3 (MRL). A helical membrane pass occupies residues 4–21 (FTLILMVVLALVQRQLWF). Over 22–105 (GKNGLVEYRQ…NKQSSLPKSD (84 aa)) the chain is Periplasmic. Residues 28–74 (EYRQVSENLLRRQADNQKLQERNMLLKEDIEDLKSGLEAIEELARND) adopt a coiled-coil conformation.

The protein belongs to the FtsB family. Part of a complex composed of FtsB, FtsL and FtsQ.

Its subcellular location is the cell inner membrane. Essential cell division protein. May link together the upstream cell division proteins, which are predominantly cytoplasmic, with the downstream cell division proteins, which are predominantly periplasmic. This Tolumonas auensis (strain DSM 9187 / NBRC 110442 / TA 4) protein is Cell division protein FtsB.